The primary structure comprises 431 residues: Histidine--tRNA ligase (431 aa).

The protein belongs to the class-II aminoacyl-tRNA synthetase family. In terms of assembly, homodimer.

Its subcellular location is the cytoplasm. The enzyme catalyses tRNA(His) + L-histidine + ATP = L-histidyl-tRNA(His) + AMP + diphosphate + H(+). In Ligilactobacillus salivarius (strain UCC118) (Lactobacillus salivarius), this protein is Histidine--tRNA ligase.